Reading from the N-terminus, the 341-residue chain is Ribosomal RNA small subunit methyltransferase H (341 aa).

S-adenosyl-L-methionine-binding positions include 47–49, Asp-64, Phe-91, Asp-109, and Gln-116; that span reads GGY.

The protein belongs to the methyltransferase superfamily. RsmH family.

It is found in the cytoplasm. It carries out the reaction cytidine(1402) in 16S rRNA + S-adenosyl-L-methionine = N(4)-methylcytidine(1402) in 16S rRNA + S-adenosyl-L-homocysteine + H(+). Specifically methylates the N4 position of cytidine in position 1402 (C1402) of 16S rRNA. In Rhizobium etli (strain ATCC 51251 / DSM 11541 / JCM 21823 / NBRC 15573 / CFN 42), this protein is Ribosomal RNA small subunit methyltransferase H.